Consider the following 199-residue polypeptide: Ribonuclease P protein subunit p25 (199 aa).

Over residues 1-11 (MENFRKVRSEE) the composition is skewed to basic and acidic residues. 2 disordered regions span residues 1–28 (MENF…SGPF) and 144–199 (LDPR…DQTA). Over residues 151–166 (YQPPNPHPGPSSPPAA) the composition is skewed to pro residues. 2 positions are modified to phosphoserine: Ser172 and Ser182.

This sequence belongs to the histone-like Alba family. Component of nuclear RNase P and RNase MRP ribonucleoproteins. RNase P consists of a catalytic RNA moiety and 10 different protein chains; POP1, POP4, POP5, POP7, RPP14, RPP21, RPP25, RPP30, RPP38 and RPP40. Within the RNase P complex, POP1, POP7 and RPP25 form the 'finger' subcomplex, POP5, RPP14, RPP40 and homodimeric RPP30 form the 'palm' subcomplex, and RPP21, POP4 and RPP38 form the 'wrist' subcomplex. All subunits of the RNase P complex interact with the catalytic RNA. Several subunits of RNase P are also part of the RNase MRP complex. RNase MRP consists of a catalytic RNA moiety and about 8 protein subunits; POP1, POP7, RPP25, RPP30, RPP38, RPP40 and possibly also POP4 and POP5. POP7 forms a heterodimer with RPP25 that binds to the P3 stem loop of the catalytic RNA.

It is found in the nucleus. The protein resides in the nucleolus. Functionally, component of ribonuclease P, a ribonucleoprotein complex that generates mature tRNA molecules by cleaving their 5'-ends. Also a component of the MRP ribonuclease complex, which cleaves pre-rRNA sequences. This Homo sapiens (Human) protein is Ribonuclease P protein subunit p25 (RPP25).